A 324-amino-acid polypeptide reads, in one-letter code: Lipoyl synthase (324 aa).

[4Fe-4S] cluster-binding residues include C71, C76, C82, C97, C101, C104, and S311. The region spanning 83 to 300 (FGHGTATFLI…GDKAREMGFT (218 aa)) is the Radical SAM core domain.

The protein belongs to the radical SAM superfamily. Lipoyl synthase family. [4Fe-4S] cluster serves as cofactor.

It is found in the cytoplasm. The enzyme catalyses [[Fe-S] cluster scaffold protein carrying a second [4Fe-4S](2+) cluster] + N(6)-octanoyl-L-lysyl-[protein] + 2 oxidized [2Fe-2S]-[ferredoxin] + 2 S-adenosyl-L-methionine + 4 H(+) = [[Fe-S] cluster scaffold protein] + N(6)-[(R)-dihydrolipoyl]-L-lysyl-[protein] + 4 Fe(3+) + 2 hydrogen sulfide + 2 5'-deoxyadenosine + 2 L-methionine + 2 reduced [2Fe-2S]-[ferredoxin]. It functions in the pathway protein modification; protein lipoylation via endogenous pathway; protein N(6)-(lipoyl)lysine from octanoyl-[acyl-carrier-protein]: step 2/2. Catalyzes the radical-mediated insertion of two sulfur atoms into the C-6 and C-8 positions of the octanoyl moiety bound to the lipoyl domains of lipoate-dependent enzymes, thereby converting the octanoylated domains into lipoylated derivatives. The polypeptide is Lipoyl synthase (Nitrosococcus oceani (strain ATCC 19707 / BCRC 17464 / JCM 30415 / NCIMB 11848 / C-107)).